The chain runs to 642 residues: Chaperone protein DnaK (642 aa).

Position 198 is a phosphothreonine; by autocatalysis (threonine 198). The interval 602 to 642 (AYAKMTEKQQSDDGAGTQNADHKEDDVVDADFEEVKSDKKD) is disordered.

Belongs to the heat shock protein 70 family.

Functionally, acts as a chaperone. The polypeptide is Chaperone protein DnaK (Dichelobacter nodosus (strain VCS1703A)).